The following is a 263-amino-acid chain: UPF0758 protein Pden_2304 (263 aa).

Residues 141 to 263 (VLTSWDALLD…ELSFRSEGLL (123 aa)) enclose the MPN domain. Residues His212, His214, and Asp225 each contribute to the Zn(2+) site. Positions 212–225 (HNHPSGDPTPSQAD) match the JAMM motif motif.

It belongs to the UPF0758 family.

This chain is UPF0758 protein Pden_2304, found in Paracoccus denitrificans (strain Pd 1222).